The chain runs to 590 residues: Cell division protein FtsZ 1 (590 aa).

Residues 24–28, 111–113, glutamate 142, arginine 146, and aspartate 190 contribute to the GTP site; these read GGGGN and GTG. 2 disordered regions span residues 346 to 372 and 524 to 590; these read AAVP…QPLQ and EATN…RQSS. Low complexity predominate over residues 534 to 546; sequence AAAPSAASQQRRP. The span at 559–576 shows a compositional bias: basic and acidic residues; the sequence is GQLDDHGRAAPQMRSHED.

It belongs to the FtsZ family. As to quaternary structure, homodimer. Polymerizes to form a dynamic ring structure in a strictly GTP-dependent manner. Interacts directly with several other division proteins.

Its subcellular location is the cytoplasm. Essential cell division protein that forms a contractile ring structure (Z ring) at the future cell division site. The regulation of the ring assembly controls the timing and the location of cell division. One of the functions of the FtsZ ring is to recruit other cell division proteins to the septum to produce a new cell wall between the dividing cells. Binds GTP and shows GTPase activity. This Rhizobium meliloti (strain 1021) (Ensifer meliloti) protein is Cell division protein FtsZ 1.